The chain runs to 161 residues: Large ribosomal subunit protein uL10 (161 aa).

This sequence belongs to the universal ribosomal protein uL10 family. Part of the ribosomal stalk of the 50S ribosomal subunit. The N-terminus interacts with L11 and the large rRNA to form the base of the stalk. The C-terminus forms an elongated spine to which L12 dimers bind in a sequential fashion forming a multimeric L10(L12)X complex.

Functionally, forms part of the ribosomal stalk, playing a central role in the interaction of the ribosome with GTP-bound translation factors. The polypeptide is Large ribosomal subunit protein uL10 (Malacoplasma penetrans (strain HF-2) (Mycoplasma penetrans)).